The sequence spans 460 residues: Bifunctional protein GlmU (460 aa).

The tract at residues 1-235 (MALSAAIILA…PLSVEGVNDR (235 aa)) is pyrophosphorylase. Residues 9–12 (LAAG), lysine 23, glutamine 76, and 81–82 (GT) each bind UDP-N-acetyl-alpha-D-glucosamine. Aspartate 109 is a Mg(2+) binding site. Residues glycine 146, glutamate 161, asparagine 176, and asparagine 233 each coordinate UDP-N-acetyl-alpha-D-glucosamine. Asparagine 233 provides a ligand contact to Mg(2+). Residues 236–256 (VQLAALAKAHNKRVCEHWMRE) are linker. The interval 257-460 (GVTILDPDTT…VEGWKPEWER (204 aa)) is N-acetyltransferase. The UDP-N-acetyl-alpha-D-glucosamine site is built by arginine 338 and lysine 356. Residue histidine 368 is the Proton acceptor of the active site. Tyrosine 371 and asparagine 382 together coordinate UDP-N-acetyl-alpha-D-glucosamine. Residues 391–392 (NY) and alanine 428 contribute to the acetyl-CoA site.

This sequence in the N-terminal section; belongs to the N-acetylglucosamine-1-phosphate uridyltransferase family. The protein in the C-terminal section; belongs to the transferase hexapeptide repeat family. As to quaternary structure, homotrimer. It depends on Mg(2+) as a cofactor.

The protein localises to the cytoplasm. It catalyses the reaction alpha-D-glucosamine 1-phosphate + acetyl-CoA = N-acetyl-alpha-D-glucosamine 1-phosphate + CoA + H(+). It carries out the reaction N-acetyl-alpha-D-glucosamine 1-phosphate + UTP + H(+) = UDP-N-acetyl-alpha-D-glucosamine + diphosphate. The protein operates within nucleotide-sugar biosynthesis; UDP-N-acetyl-alpha-D-glucosamine biosynthesis; N-acetyl-alpha-D-glucosamine 1-phosphate from alpha-D-glucosamine 6-phosphate (route II): step 2/2. It functions in the pathway nucleotide-sugar biosynthesis; UDP-N-acetyl-alpha-D-glucosamine biosynthesis; UDP-N-acetyl-alpha-D-glucosamine from N-acetyl-alpha-D-glucosamine 1-phosphate: step 1/1. It participates in bacterial outer membrane biogenesis; LPS lipid A biosynthesis. Catalyzes the last two sequential reactions in the de novo biosynthetic pathway for UDP-N-acetylglucosamine (UDP-GlcNAc). The C-terminal domain catalyzes the transfer of acetyl group from acetyl coenzyme A to glucosamine-1-phosphate (GlcN-1-P) to produce N-acetylglucosamine-1-phosphate (GlcNAc-1-P), which is converted into UDP-GlcNAc by the transfer of uridine 5-monophosphate (from uridine 5-triphosphate), a reaction catalyzed by the N-terminal domain. The protein is Bifunctional protein GlmU of Bifidobacterium adolescentis (strain ATCC 15703 / DSM 20083 / NCTC 11814 / E194a).